We begin with the raw amino-acid sequence, 369 residues long: Queuine tRNA-ribosyltransferase (369 aa).

Asp89 acts as the Proton acceptor in catalysis. Substrate is bound by residues 89-93 (DSGGF), Asp142, Gln184, and Gly211. The tract at residues 242–248 (GGGSPEL) is RNA binding. Asp261 functions as the Nucleophile in the catalytic mechanism. Positions 266 to 270 (TRIAR) are RNA binding; important for wobble base 34 recognition. 4 residues coordinate Zn(2+): Cys299, Cys301, Cys304, and His330.

The protein belongs to the queuine tRNA-ribosyltransferase family. Homodimer. Within each dimer, one monomer is responsible for RNA recognition and catalysis, while the other monomer binds to the replacement base PreQ1. The cofactor is Zn(2+).

It carries out the reaction 7-aminomethyl-7-carbaguanine + guanosine(34) in tRNA = 7-aminomethyl-7-carbaguanosine(34) in tRNA + guanine. Its pathway is tRNA modification; tRNA-queuosine biosynthesis. Functionally, catalyzes the base-exchange of a guanine (G) residue with the queuine precursor 7-aminomethyl-7-deazaguanine (PreQ1) at position 34 (anticodon wobble position) in tRNAs with GU(N) anticodons (tRNA-Asp, -Asn, -His and -Tyr). Catalysis occurs through a double-displacement mechanism. The nucleophile active site attacks the C1' of nucleotide 34 to detach the guanine base from the RNA, forming a covalent enzyme-RNA intermediate. The proton acceptor active site deprotonates the incoming PreQ1, allowing a nucleophilic attack on the C1' of the ribose to form the product. After dissociation, two additional enzymatic reactions on the tRNA convert PreQ1 to queuine (Q), resulting in the hypermodified nucleoside queuosine (7-(((4,5-cis-dihydroxy-2-cyclopenten-1-yl)amino)methyl)-7-deazaguanosine). This is Queuine tRNA-ribosyltransferase from Thermotoga maritima (strain ATCC 43589 / DSM 3109 / JCM 10099 / NBRC 100826 / MSB8).